The sequence spans 588 residues: Adenine deaminase (588 aa).

It belongs to the metallo-dependent hydrolases superfamily. Adenine deaminase family. Homodimer. It depends on Mn(2+) as a cofactor.

The enzyme catalyses adenine + H2O + H(+) = hypoxanthine + NH4(+). This is Adenine deaminase from Escherichia fergusonii (strain ATCC 35469 / DSM 13698 / CCUG 18766 / IAM 14443 / JCM 21226 / LMG 7866 / NBRC 102419 / NCTC 12128 / CDC 0568-73).